We begin with the raw amino-acid sequence, 124 residues long: Acidic phospholipase A2 (124 aa).

Disulfide bonds link Cys-26-Cys-116, Cys-28-Cys-44, Cys-43-Cys-95, Cys-49-Cys-124, Cys-50-Cys-88, Cys-57-Cys-81, and Cys-75-Cys-86. Residues Tyr-27, Gly-29, and Gly-31 each coordinate Ca(2+). Residue His-47 is part of the active site. Asp-48 lines the Ca(2+) pocket. Asp-89 is an active-site residue.

The protein belongs to the phospholipase A2 family. Group II subfamily. D49 sub-subfamily. The cofactor is Ca(2+). Expressed by the venom gland.

The protein localises to the secreted. It carries out the reaction a 1,2-diacyl-sn-glycero-3-phosphocholine + H2O = a 1-acyl-sn-glycero-3-phosphocholine + a fatty acid + H(+). In terms of biological role, snake venom phospholipase A2 (PLA2) that inhibits ADP-induced platelet aggregation. PLA2 catalyzes the calcium-dependent hydrolysis of the 2-acyl groups in 3-sn-phosphoglycerides. The sequence is that of Acidic phospholipase A2 from Gloydius ussuriensis (Ussuri mamushi).